We begin with the raw amino-acid sequence, 418 residues long: Tyrosine--tRNA ligase (418 aa).

The 'HIGH' region signature appears at 42-51 (PTSPDLHLGH). A 'KMSKS' region motif is present at residues 226-230 (KMSKS). Residue K229 coordinates ATP. The S4 RNA-binding domain maps to 339–400 (VRLVALLTKS…GKRNFIKVRL (62 aa)).

It belongs to the class-I aminoacyl-tRNA synthetase family. TyrS type 2 subfamily. In terms of assembly, homodimer.

It is found in the cytoplasm. It carries out the reaction tRNA(Tyr) + L-tyrosine + ATP = L-tyrosyl-tRNA(Tyr) + AMP + diphosphate + H(+). Functionally, catalyzes the attachment of tyrosine to tRNA(Tyr) in a two-step reaction: tyrosine is first activated by ATP to form Tyr-AMP and then transferred to the acceptor end of tRNA(Tyr). This chain is Tyrosine--tRNA ligase, found in Xylella fastidiosa (strain Temecula1 / ATCC 700964).